A 118-amino-acid chain; its full sequence is Small ribosomal subunit protein uS13 (118 aa).

Residues 94–118 (SLPVRGQRTKTNARTRKGPRRPIKR) are disordered.

It belongs to the universal ribosomal protein uS13 family. Part of the 30S ribosomal subunit. Forms a loose heterodimer with protein S19. Forms two bridges to the 50S subunit in the 70S ribosome.

Located at the top of the head of the 30S subunit, it contacts several helices of the 16S rRNA. In the 70S ribosome it contacts the 23S rRNA (bridge B1a) and protein L5 of the 50S subunit (bridge B1b), connecting the 2 subunits; these bridges are implicated in subunit movement. Contacts the tRNAs in the A and P-sites. This is Small ribosomal subunit protein uS13 from Dichelobacter nodosus (strain VCS1703A).